A 497-amino-acid polypeptide reads, in one-letter code: Probable cytosol aminopeptidase (497 aa).

Positions 263 and 268 each coordinate Mn(2+). Residue Lys-275 is part of the active site. Positions 286, 345, and 347 each coordinate Mn(2+). Arg-349 is a catalytic residue.

The protein belongs to the peptidase M17 family. Mn(2+) is required as a cofactor.

It is found in the cytoplasm. The catalysed reaction is Release of an N-terminal amino acid, Xaa-|-Yaa-, in which Xaa is preferably Leu, but may be other amino acids including Pro although not Arg or Lys, and Yaa may be Pro. Amino acid amides and methyl esters are also readily hydrolyzed, but rates on arylamides are exceedingly low.. The enzyme catalyses Release of an N-terminal amino acid, preferentially leucine, but not glutamic or aspartic acids.. Functionally, presumably involved in the processing and regular turnover of intracellular proteins. Catalyzes the removal of unsubstituted N-terminal amino acids from various peptides. The chain is Probable cytosol aminopeptidase from Brucella suis biovar 1 (strain 1330).